The primary structure comprises 554 residues: CTP synthase (554 aa).

The segment at M1 to I270 is amidoligase domain. S13 lines the CTP pocket. S13 is a UTP binding site. ATP contacts are provided by residues S14 to I19 and D71. Residues D71 and E144 each coordinate Mg(2+). CTP contacts are provided by residues D151 to E153, K191 to Q196, and K227. Residues K191 to Q196 and K227 contribute to the UTP site. A Glutamine amidotransferase type-1 domain is found at T295–R547. Residue G356 participates in L-glutamine binding. C383 functions as the Nucleophile; for glutamine hydrolysis in the catalytic mechanism. L-glutamine is bound by residues L384 to Q387, E407, and R473. Residues H520 and E522 contribute to the active site.

This sequence belongs to the CTP synthase family. In terms of assembly, homotetramer.

The catalysed reaction is UTP + L-glutamine + ATP + H2O = CTP + L-glutamate + ADP + phosphate + 2 H(+). It carries out the reaction L-glutamine + H2O = L-glutamate + NH4(+). It catalyses the reaction UTP + NH4(+) + ATP = CTP + ADP + phosphate + 2 H(+). The protein operates within pyrimidine metabolism; CTP biosynthesis via de novo pathway; CTP from UDP: step 2/2. With respect to regulation, allosterically activated by GTP, when glutamine is the substrate; GTP has no effect on the reaction when ammonia is the substrate. The allosteric effector GTP functions by stabilizing the protein conformation that binds the tetrahedral intermediate(s) formed during glutamine hydrolysis. Inhibited by the product CTP, via allosteric rather than competitive inhibition. Functionally, catalyzes the ATP-dependent amination of UTP to CTP with either L-glutamine or ammonia as the source of nitrogen. Regulates intracellular CTP levels through interactions with the four ribonucleotide triphosphates. In Ralstonia nicotianae (strain ATCC BAA-1114 / GMI1000) (Ralstonia solanacearum), this protein is CTP synthase.